The following is a 407-amino-acid chain: Phosphopentomutase (407 aa).

Asp-10, Asp-306, His-311, Asp-347, His-348, and His-359 together coordinate Mn(2+).

It belongs to the phosphopentomutase family. Mn(2+) is required as a cofactor.

Its subcellular location is the cytoplasm. The enzyme catalyses 2-deoxy-alpha-D-ribose 1-phosphate = 2-deoxy-D-ribose 5-phosphate. It carries out the reaction alpha-D-ribose 1-phosphate = D-ribose 5-phosphate. Its pathway is carbohydrate degradation; 2-deoxy-D-ribose 1-phosphate degradation; D-glyceraldehyde 3-phosphate and acetaldehyde from 2-deoxy-alpha-D-ribose 1-phosphate: step 1/2. In terms of biological role, isomerase that catalyzes the conversion of deoxy-ribose 1-phosphate (dRib-1-P) and ribose 1-phosphate (Rib-1-P) to deoxy-ribose 5-phosphate (dRib-5-P) and ribose 5-phosphate (Rib-5-P), respectively. This is Phosphopentomutase from Salmonella gallinarum (strain 287/91 / NCTC 13346).